The following is a 317-amino-acid chain: Protoheme IX farnesyltransferase (317 aa).

9 helical membrane passes run 36–56 (VMVLVIFTALVGMVVSDATVN), 57–77 (PVIAAISLLMIAVGAGASGCL), 108–128 (LAFGIVLSVGSVLILGLASNW), 129–149 (LAAGLLAFTIVFYAVIYSMWL), 157–177 (IVIGGAAGALPPVVGQAAVTG), 184–204 (LVLFAIIFIWTPPHFWALALV), 230–247 (IVWYSLLLAPLALVPVWL), 251–273 (GWLYAVVGVLGGLGMLAGAVQVY), and 284–304 (AAMGLFAFSILYLFLLFSALL).

It belongs to the UbiA prenyltransferase family. Protoheme IX farnesyltransferase subfamily.

The protein resides in the cell inner membrane. It catalyses the reaction heme b + (2E,6E)-farnesyl diphosphate + H2O = Fe(II)-heme o + diphosphate. The protein operates within porphyrin-containing compound metabolism; heme O biosynthesis; heme O from protoheme: step 1/1. Functionally, converts heme B (protoheme IX) to heme O by substitution of the vinyl group on carbon 2 of heme B porphyrin ring with a hydroxyethyl farnesyl side group. This is Protoheme IX farnesyltransferase from Methylorubrum populi (strain ATCC BAA-705 / NCIMB 13946 / BJ001) (Methylobacterium populi).